We begin with the raw amino-acid sequence, 550 residues long: Glypican-1 (550 aa).

Positions 1 to 20 (MRFFPWGFWLLCVASAPARG) are cleaved as a signal peptide. 7 disulfides stabilise this stretch: cysteine 29-cysteine 65, cysteine 59-cysteine 253, cysteine 66-cysteine 256, cysteine 188-cysteine 340, cysteine 243-cysteine 276, cysteine 265-cysteine 412, and cysteine 269-cysteine 398. N-linked (GlcNAc...) asparagine glycosylation is found at asparagine 76 and asparagine 113. Residue asparagine 382 is glycosylated (N-linked (GlcNAc...) asparagine). Disordered regions lie at residues 475-494 (FQDA…CPDD) and 502-522 (KSPS…GHGV). Low complexity predominate over residues 481-494 (DMSGSGSGDSCPDD). 3 O-linked (Xyl...) (heparan sulfate) serine glycosylation sites follow: serine 483, serine 485, and serine 487. Residue glycine 524 is the site of GPI-anchor amidated glycine attachment. A propeptide spans 525 to 550 (ASSRSLPSAFLLFLSGASIVVQHLWR) (removed in mature form).

This sequence belongs to the glypican family. O-glycosylated with heparan sulfate.

It localises to the cell membrane. The protein localises to the endosome. It is found in the secreted. Its subcellular location is the extracellular space. In terms of biological role, cell surface proteoglycan that bears heparan sulfate. Modulates Wnt-signaling pathway. This is Glypican-1 (GPC1) from Gallus gallus (Chicken).